The primary structure comprises 410 residues: MVKVKQSEINIGMVGHVDHGKTSLTRQLTGTWTDTHSEELKRGISIRLGYADCEIMKCPKCGAPEAYSVSKTCPVCGTKTKMSRKISFVDAPGHETLMATMLSGASLMNGAILVIAATEKCPQPQTKEHLMALDALGIENIIIVQNKIDLVDEERAKESYNEIKEFVKDTVAEKAPIIPISAHHGANIDILLNAIEDLMPTPEMDEGAPARLYVARSFDINKPGCEISKLKGGVIGGSIIQGTLNSGEKIEIKPGLKIVEGNKIRWESIITKITSLGVGGKTVKVAHPGGLVGIGTELDPALTKSDSLSGCVAGAPGTLPETLSEITVQTKLLDRIVGSDEELIISPLKSNEALMLNVGTATTVGIITSARGDMADMKLKLPICADKGDRIAMSRRIGSRWRLIGYGIIQ.

The tr-type G domain maps to 6–203 (QSEINIGMVG…AIEDLMPTPE (198 aa)). The interval 15–22 (GHVDHGKT) is G1. The Mg(2+) site is built by Asp-18, Thr-22, Gly-43, and Ser-45. 18–23 (DHGKTS) is a GTP binding site. A G2 region spans residues 43–47 (GISIR). Zn(2+) contacts are provided by Cys-58, Cys-61, Cys-73, and Cys-76. Residues 90 to 93 (DAPG) form a G3 region. GTP contacts are provided by residues 146–149 (NKID) and 181–183 (SAH). Residues 146–149 (NKID) form a G4 region. The tract at residues 181 to 183 (SAH) is G5.

This sequence belongs to the TRAFAC class translation factor GTPase superfamily. Classic translation factor GTPase family. EIF2G subfamily. Heterotrimer composed of an alpha, a beta and a gamma chain. The cofactor is Mg(2+).

It catalyses the reaction GTP + H2O = GDP + phosphate + H(+). Functionally, eIF-2 functions in the early steps of protein synthesis by forming a ternary complex with GTP and initiator tRNA. The chain is Translation initiation factor 2 subunit gamma from Methanococcus aeolicus (strain ATCC BAA-1280 / DSM 17508 / OCM 812 / Nankai-3).